Reading from the N-terminus, the 419-residue chain is Squamosa promoter-binding-like protein 2 (419 aa).

Positions 77-96 are disordered; it reads SAEVRTHNFTSETGESLPGE. Residues 166–243 form an SBP-type zinc finger; sequence TPHCQVEGCN…SDHNARRRKP (78 aa). Positions 169, 174, 191, 194, 210, 213, 217, and 229 each coordinate Zn(2+). Positions 226–242 match the Bipartite nuclear localization signal motif; that stretch reads KRSCRRRLSDHNARRRK. Residues 230-249 form a disordered region; it reads RRRLSDHNARRRKPNPGRTY.

Zn(2+) is required as a cofactor.

The protein localises to the nucleus. Functionally, trans-acting factor that binds specifically to the consensus nucleotide sequence 5'-TNCGTACAA-3'. This Arabidopsis thaliana (Mouse-ear cress) protein is Squamosa promoter-binding-like protein 2 (SPL2).